A 145-amino-acid chain; its full sequence is Class I hydrophobin rodE (145 aa).

Cystine bridges form between cysteine 43–cysteine 126, cysteine 59–cysteine 120, cysteine 60–cysteine 95, and cysteine 127–cysteine 140.

The protein belongs to the fungal hydrophobin family. Self-assembles to form functional amyloid fibrils called rodlets. Self-assembly into fibrillar rodlets occurs spontaneously at hydrophobic:hydrophilic interfaces and the rodlets further associate laterally to form amphipathic monolayers.

Functionally, aerial growth, conidiation, and dispersal of filamentous fungi in the environment rely upon a capability of their secreting small amphipathic proteins called hydrophobins (HPBs) with low sequence identity. Class I can self-assemble into an outermost layer of rodlet bundles on aerial cell surfaces, conferring cellular hydrophobicity that supports fungal growth, development and dispersal; whereas Class II form highly ordered films at water-air interfaces through intermolecular interactions but contribute nothing to the rodlet structure. RodE is a class I hydrophobin that, unlike rodA, is not required for rodlet formation. The polypeptide is Class I hydrophobin rodE (Aspergillus fumigatus (strain ATCC MYA-4609 / CBS 101355 / FGSC A1100 / Af293) (Neosartorya fumigata)).